We begin with the raw amino-acid sequence, 388 residues long: Putative F-box protein At3g49520 (388 aa).

The region spanning 1–47 (MTTISDLPYDLVKEIFSWVPFTSLRAVRSTCKTWNALSKNQIFGKKS) is the F-box domain.

The polypeptide is Putative F-box protein At3g49520 (Arabidopsis thaliana (Mouse-ear cress)).